A 102-amino-acid polypeptide reads, in one-letter code: Small ribosomal subunit protein uS10 (102 aa).

The protein belongs to the universal ribosomal protein uS10 family. In terms of assembly, part of the 30S ribosomal subunit.

Functionally, involved in the binding of tRNA to the ribosomes. The chain is Small ribosomal subunit protein uS10 from Oenococcus oeni (strain ATCC BAA-331 / PSU-1).